A 97-amino-acid polypeptide reads, in one-letter code: Co-chaperonin GroES (97 aa).

The protein belongs to the GroES chaperonin family. In terms of assembly, heptamer of 7 subunits arranged in a ring. Interacts with the chaperonin GroEL.

It is found in the cytoplasm. In terms of biological role, together with the chaperonin GroEL, plays an essential role in assisting protein folding. The GroEL-GroES system forms a nano-cage that allows encapsulation of the non-native substrate proteins and provides a physical environment optimized to promote and accelerate protein folding. GroES binds to the apical surface of the GroEL ring, thereby capping the opening of the GroEL channel. The protein is Co-chaperonin GroES of Pseudomonas savastanoi pv. phaseolicola (strain 1448A / Race 6) (Pseudomonas syringae pv. phaseolicola (strain 1448A / Race 6)).